The primary structure comprises 157 residues: Ribosomal RNA large subunit methyltransferase H (157 aa).

S-adenosyl-L-methionine is bound by residues G104 and 123–128; that span reads LSSLTL.

This sequence belongs to the RNA methyltransferase RlmH family. Homodimer.

It localises to the cytoplasm. The enzyme catalyses pseudouridine(1915) in 23S rRNA + S-adenosyl-L-methionine = N(3)-methylpseudouridine(1915) in 23S rRNA + S-adenosyl-L-homocysteine + H(+). Specifically methylates the pseudouridine at position 1915 (m3Psi1915) in 23S rRNA. The polypeptide is Ribosomal RNA large subunit methyltransferase H (Nitrosococcus oceani (strain ATCC 19707 / BCRC 17464 / JCM 30415 / NCIMB 11848 / C-107)).